The primary structure comprises 374 residues: Queuine tRNA-ribosyltransferase (374 aa).

The active-site Proton acceptor is the D90. Residues 90 to 94 (DSGGF), D144, Q193, and G220 contribute to the substrate site. The RNA binding stretch occupies residues 251–257 (GVGTPED). D270 (nucleophile) is an active-site residue. The RNA binding; important for wobble base 34 recognition stretch occupies residues 275–279 (TRNAR). The Zn(2+) site is built by C308, C310, C313, and H339.

Belongs to the queuine tRNA-ribosyltransferase family. As to quaternary structure, homodimer. Within each dimer, one monomer is responsible for RNA recognition and catalysis, while the other monomer binds to the replacement base PreQ1. Zn(2+) serves as cofactor.

It catalyses the reaction 7-aminomethyl-7-carbaguanine + guanosine(34) in tRNA = 7-aminomethyl-7-carbaguanosine(34) in tRNA + guanine. It functions in the pathway tRNA modification; tRNA-queuosine biosynthesis. In terms of biological role, catalyzes the base-exchange of a guanine (G) residue with the queuine precursor 7-aminomethyl-7-deazaguanine (PreQ1) at position 34 (anticodon wobble position) in tRNAs with GU(N) anticodons (tRNA-Asp, -Asn, -His and -Tyr). Catalysis occurs through a double-displacement mechanism. The nucleophile active site attacks the C1' of nucleotide 34 to detach the guanine base from the RNA, forming a covalent enzyme-RNA intermediate. The proton acceptor active site deprotonates the incoming PreQ1, allowing a nucleophilic attack on the C1' of the ribose to form the product. After dissociation, two additional enzymatic reactions on the tRNA convert PreQ1 to queuine (Q), resulting in the hypermodified nucleoside queuosine (7-(((4,5-cis-dihydroxy-2-cyclopenten-1-yl)amino)methyl)-7-deazaguanosine). This is Queuine tRNA-ribosyltransferase from Campylobacter fetus subsp. fetus (strain 82-40).